A 302-amino-acid polypeptide reads, in one-letter code: Putative gluconeogenesis factor (302 aa).

The protein belongs to the gluconeogenesis factor family.

The protein localises to the cytoplasm. In terms of biological role, required for morphogenesis under gluconeogenic growth conditions. The sequence is that of Putative gluconeogenesis factor (ybhK) from Salmonella typhimurium (strain LT2 / SGSC1412 / ATCC 700720).